The sequence spans 353 residues: Mitogen-activated protein kinase FUS3 (353 aa).

Residues 13–309 (FQLKSLLGEG…AKEALEHPYL (297 aa)) form the Protein kinase domain. ATP-binding positions include 19-27 (LGEGAYGVV) and K42. D137 functions as the Proton acceptor in the catalytic mechanism. The residue at position 180 (T180) is a Phosphothreonine. Residues 180–182 (TEY) carry the TXY motif. Y182 is modified (phosphotyrosine). K345 is covalently cross-linked (Glycyl lysine isopeptide (Lys-Gly) (interchain with G-Cter in ubiquitin)).

It belongs to the protein kinase superfamily. CMGC Ser/Thr protein kinase family. MAP kinase subfamily. As to quaternary structure, in the nucleus, FUS3 forms a complex with DIG1, DIG2 and STE12. The interaction of FUS3 with STE12 depends on the presence of both DIG1 and DIG2. STE12 is lost from FUS3/DIG1/DIG2 complex after pheromone treatment. During its activation and phosphorylation, FUS3 forms a membrane-associated complex with the scaffold protein STE5, the MAPKK STE7, the MAPKKK STE11, and the G-protein beta subunit GBB/STE4; interacting directly with STE7 and STE5. The cofactor is Mg(2+). In terms of processing, dually phosphorylated on Thr-180 and Tyr-182 by STE7 in response to pheromone induction, which activates the enzyme. Activated FUS3 initiates a feedback signal, down-regulating phosphorylation of both, FUS3 and KSS1.

It is found in the nucleus. Its subcellular location is the cytoplasm. The protein localises to the periplasm. The catalysed reaction is L-seryl-[protein] + ATP = O-phospho-L-seryl-[protein] + ADP + H(+). It catalyses the reaction L-threonyl-[protein] + ATP = O-phospho-L-threonyl-[protein] + ADP + H(+). With respect to regulation, activated by tyrosine and threonine phosphorylation after pheromone treatment. Functionally, together with closely related KSS1, FUS3 is the final kinase in the signal transduction cascade regulating activation/repression of the mating and filamentation pathways, induced by pheromone and nitrogen/carbon limitation, respectively. Phosphorylated FUS3 activates the mating but suppresses the filamentation pathway, whereas activated KSS1 activates both pathways. Pheromone-activated FUS3 functions by inhibiting the binding of the transcriptional activator STE12 to filamentation specific genes while inducing its binding to and activity at mating specific genes. Non-activated FUS3 has a repressive effect on STE12 transcriptional activity. KSS1 can partially compensate for the lack of FUS3 but mating efficiency is reduced and the filamentation program is partially activated upon pheromone signaling. FUS3 phosphorylates STE7, STE5, FAR1, DIG1, DIG2 and STE12. The protein is Mitogen-activated protein kinase FUS3 (FUS3) of Saccharomyces cerevisiae (strain ATCC 204508 / S288c) (Baker's yeast).